The primary structure comprises 201 residues: ATP-dependent Clp protease proteolytic subunit (201 aa).

Residue serine 98 is the Nucleophile of the active site. Histidine 123 is an active-site residue.

It belongs to the peptidase S14 family. Fourteen ClpP subunits assemble into 2 heptameric rings which stack back to back to give a disk-like structure with a central cavity, resembling the structure of eukaryotic proteasomes.

It localises to the cytoplasm. The enzyme catalyses Hydrolysis of proteins to small peptides in the presence of ATP and magnesium. alpha-casein is the usual test substrate. In the absence of ATP, only oligopeptides shorter than five residues are hydrolyzed (such as succinyl-Leu-Tyr-|-NHMec, and Leu-Tyr-Leu-|-Tyr-Trp, in which cleavage of the -Tyr-|-Leu- and -Tyr-|-Trp bonds also occurs).. Its function is as follows. Cleaves peptides in various proteins in a process that requires ATP hydrolysis. Has a chymotrypsin-like activity. Plays a major role in the degradation of misfolded proteins. This chain is ATP-dependent Clp protease proteolytic subunit, found in Rickettsia canadensis (strain McKiel).